Reading from the N-terminus, the 336-residue chain is CD226 antigen (336 aa).

Residues 1–18 (MDYPTLLLALLHVYRALC) form the signal peptide. 2 Ig-like C2-type domains span residues 19-126 (EEVL…QVVQ) and 135-239 (PPNS…MRLT). Topologically, residues 19–254 (EEVLWHTSVP…TDNQYTRFVT (236 aa)) are extracellular. Asparagine 32, asparagine 83, asparagine 90, asparagine 97, asparagine 147, asparagine 186, asparagine 198, and asparagine 231 each carry an N-linked (GlcNAc...) asparagine glycan. Cysteine 37 and cysteine 108 are joined by a disulfide. 2 disulfide bridges follow: cysteine 152–cysteine 222 and cysteine 179–cysteine 199. The helical transmembrane segment at 255-275 (GGTVLLLLFVISITTIIVIFL) threads the bilayer. Over 276–336 (NRRRRRERSD…TFSRRPKTRV (61 aa)) the chain is Cytoplasmic. The disordered stretch occupies residues 298 to 319 (KNYRSPISASQPTNQSMDDTRE). Positions 302 to 314 (SPISASQPTNQSM) are enriched in polar residues. Tyrosine 322 is subject to Phosphotyrosine.

In terms of assembly, interacts with PVR and NECTIN2. Competes with PVRIG for NECTIN2-binding. Interacts with ITGAL; this interaction mediates CD226 localization to lipid rafts. Post-translationally, phosphorylated.

The protein localises to the cell membrane. In terms of biological role, cell surface receptor that plays an important role in the immune system, particularly in intercellular adhesion, lymphocyte signaling, cytotoxicity and lymphokine secretion mediated by cytotoxic T-cells and NK cells. Functions as a costimulatory receptor upon recognition of target cells, such as virus-infected or tumor cells. Upon binding to its ligands PVR/CD155 or NECTIN2/CD112 on target cells, promotes the cytotoxic activity of NK cells and CTLs, enhancing their ability to kill these cells. Mechanistically, phosphorylation by Src kinases such as LYN of FYN, enables binding to adapter GRB2, leading to activation of VAV1, PI3K and PLCG1. Promotes also activation of kinases ERK and AKT, as well as calcium fluxes. This is CD226 antigen (CD226) from Macaca mulatta (Rhesus macaque).